A 564-amino-acid polypeptide reads, in one-letter code: Keratin, type II cytoskeletal 6A (564 aa).

Over residues 1–11 (MASTSTTIRSH) the composition is skewed to low complexity. The tract at residues 1–23 (MASTSTTIRSHSSSRRGFSANSA) is disordered. Ala2 carries the post-translational modification N-acetylalanine. Residues 2 to 162 (ASTSTTIRSH…DPTIQRVRAE (161 aa)) form a head region. The segment at 163–198 (EREQIKTLNNKFASFIDKVRFLEQQNKVLETKWTLL) is coil 1A. Residues 163–476 (EREQIKTLNN…KLLEGEECRL (314 aa)) form the IF rod domain. The tract at residues 199 to 217 (QEQGTKTVRQNLEPLFEQY) is linker 1. Positions 218–309 (INNLRRQLDS…ALYDAELSQM (92 aa)) are coil 1B. The linker 12 stretch occupies residues 310–333 (QTHISDTSVVLSMDNNRNLDLDSI). Residues 334–472 (IAEVKAQYEE…ATYRKLLEGE (139 aa)) form a coil 2 region. The tract at residues 473–564 (ECRLNGEGVG…SSSSRKSYKH (92 aa)) is tail.

Belongs to the intermediate filament family. In terms of assembly, heterodimer of a type I and a type II keratin. KRT6 isomers associate with KRT16 and/or KRT17. Interacts with TCHP. In terms of tissue distribution, expressed in the corneal epithelium (at protein level).

In terms of biological role, epidermis-specific type I keratin involved in wound healing. Involved in the activation of follicular keratinocytes after wounding, while it does not play a major role in keratinocyte proliferation or migration. Participates in the regulation of epithelial migration by inhibiting the activity of SRC during wound repair. The chain is Keratin, type II cytoskeletal 6A (KRT6A) from Homo sapiens (Human).